We begin with the raw amino-acid sequence, 761 residues long: Wall-associated receptor kinase-like 4 (761 aa).

The signal sequence occupies residues 1–26 (MKKETQNLQCIPLVISVLSLFGVSSA). Topologically, residues 27–349 (RKPPYLCNRV…EPKKPGQIKP (323 aa)) are extracellular. N-linked (GlcNAc...) asparagine glycans are attached at residues Asn-64, Asn-166, Asn-206, Asn-226, and Asn-262. The interval 278–339 (CVCSYGYFSG…CVNKPGWFTC (62 aa)) is atypical EGF-like. Cystine bridges form between Cys-280–Cys-293, Cys-316–Cys-330, and Cys-325–Cys-339. A helical transmembrane segment spans residues 350–370 (VFQGVLIGSALLLFAFGIFGL). Residues 371–761 (YKFIKKQRRS…VEPLVPLRTW (391 aa)) lie on the Cytoplasmic side of the membrane. One can recognise a Protein kinase domain in the interval 424 to 697 (FNTNRVLGQG…REVSVELERI (274 aa)). ATP-binding positions include 430 to 438 (LGQGGQGTV) and Lys-452. Tyr-497 bears the Phosphotyrosine mark. The active-site Proton acceptor is Asp-549. Phosphothreonine occurs at positions 583 and 588. Tyr-596 bears the Phosphotyrosine mark. The segment at 701 to 761 (SYKSEIHNDD…VEPLVPLRTW (61 aa)) is disordered. Residues 708–732 (NDDDDDDDDDDEDDQAMELNIEETW) are compositionally biased toward acidic residues.

The protein belongs to the protein kinase superfamily. Ser/Thr protein kinase family. As to expression, expressed in the whole plant. Detected in root-shoot junctions and lateral root initiation sites.

The protein localises to the membrane. The enzyme catalyses L-seryl-[protein] + ATP = O-phospho-L-seryl-[protein] + ADP + H(+). It catalyses the reaction L-threonyl-[protein] + ATP = O-phospho-L-threonyl-[protein] + ADP + H(+). Serine/threonine-protein kinase that may function as a signaling receptor of extracellular matrix component. Plays a role in plant mineral nutrients response. The protein is Wall-associated receptor kinase-like 4 (WAKL4) of Arabidopsis thaliana (Mouse-ear cress).